The following is a 335-amino-acid chain: Phosphate acyltransferase (335 aa).

It belongs to the PlsX family. Homodimer. Probably interacts with PlsY.

Its subcellular location is the cytoplasm. It carries out the reaction a fatty acyl-[ACP] + phosphate = an acyl phosphate + holo-[ACP]. It participates in lipid metabolism; phospholipid metabolism. Functionally, catalyzes the reversible formation of acyl-phosphate (acyl-PO(4)) from acyl-[acyl-carrier-protein] (acyl-ACP). This enzyme utilizes acyl-ACP as fatty acyl donor, but not acyl-CoA. This is Phosphate acyltransferase from Heliobacterium modesticaldum (strain ATCC 51547 / Ice1).